Here is a 440-residue protein sequence, read N- to C-terminus: Xylose isomerase (440 aa).

Catalysis depends on residues His-100 and Asp-103. Mg(2+) contacts are provided by Glu-231, Glu-267, His-270, Asp-295, Asp-306, Asp-308, and Asp-338.

It belongs to the xylose isomerase family. Homotetramer. The cofactor is Mg(2+).

It is found in the cytoplasm. The catalysed reaction is alpha-D-xylose = alpha-D-xylulofuranose. The polypeptide is Xylose isomerase (Paraburkholderia phytofirmans (strain DSM 17436 / LMG 22146 / PsJN) (Burkholderia phytofirmans)).